The chain runs to 132 residues: uncharacterized protein (132 aa).

The N-terminal stretch at 1-24 (MVTIGSSSLVLFLFFVVFVQITYT) is a signal peptide. 2 consecutive transmembrane segments (helical) span residues 75 to 95 (YVNV…ILGI) and 112 to 132 (ESAI…VYIH).

It localises to the membrane. This is an uncharacterized protein from Saccharomyces cerevisiae (strain ATCC 204508 / S288c) (Baker's yeast).